A 191-amino-acid chain; its full sequence is MSNINVIDILKESDALLEGHFLLSSGRHSNRYCQCAKLLQCPQKAEKVISVIAEKLKEVDFNIIVGPAMGGVIVSYELARQTNKPGIFAERKEGVMCIRRGFEIKKGDKVIISEDVVTTGKSSLEVAKVIEEMGGEVVGIACIVDRRAEDIKTNYPIYSACKLEIETYEKDNCELCKKNIPFVKPGSREQK.

A 5-phospho-alpha-D-ribose 1-diphosphate-binding site is contributed by 114 to 122; sequence EDVVTTGKS. The orotate site is built by T118 and R146.

The protein belongs to the purine/pyrimidine phosphoribosyltransferase family. PyrE subfamily. In terms of assembly, homodimer. Mg(2+) serves as cofactor.

It catalyses the reaction orotidine 5'-phosphate + diphosphate = orotate + 5-phospho-alpha-D-ribose 1-diphosphate. It participates in pyrimidine metabolism; UMP biosynthesis via de novo pathway; UMP from orotate: step 1/2. Its function is as follows. Catalyzes the transfer of a ribosyl phosphate group from 5-phosphoribose 1-diphosphate to orotate, leading to the formation of orotidine monophosphate (OMP). The chain is Orotate phosphoribosyltransferase from Clostridium botulinum (strain ATCC 19397 / Type A).